The chain runs to 103 residues: Small ribosomal subunit protein uS10 (103 aa).

The protein belongs to the universal ribosomal protein uS10 family. Part of the 30S ribosomal subunit.

In terms of biological role, involved in the binding of tRNA to the ribosomes. The protein is Small ribosomal subunit protein uS10 of Chlorobium limicola (strain DSM 245 / NBRC 103803 / 6330).